The following is a 342-amino-acid chain: Cyclin pch1 (342 aa).

The disordered stretch occupies residues 261-342 (LPIDQKNGSH…TDKEMETEAS (82 aa)). The segment covering 278–314 (TPSSLASVSTQATPQHQNSSGRTDSFHSLNTETPSKS) has biased composition (polar residues). At T300 the chain carries Phosphothreonine. A Phosphoserine modification is found at S302. Over residues 329–342 (KSSDTDKEMETEAS) the composition is skewed to basic and acidic residues.

It belongs to the cyclin family. Cyclin C subfamily. Interacts with cdc2 protein kinase and with the N-terminal domain of cdk9.

It localises to the nucleus. Functionally, essential for progression through the whole cell cycle. This chain is Cyclin pch1 (pch1), found in Schizosaccharomyces pombe (strain 972 / ATCC 24843) (Fission yeast).